Here is a 145-residue protein sequence, read N- to C-terminus: Protoporphyrinogen IX oxidase (145 aa).

4 helical membrane passes run 6–26 (LWFK…LLYL), 61–81 (AMIS…FVAL), 83–103 (TWFQ…GLLA), and 123–143 (IVNE…IVKP). His-12 lines the heme pocket. Lys-88 provides a ligand contact to heme.

The protein belongs to the HemJ family. As to quaternary structure, homodimer. Heme b serves as cofactor.

Its subcellular location is the cell membrane. It carries out the reaction protoporphyrinogen IX + 3 A = protoporphyrin IX + 3 AH2. It participates in porphyrin-containing compound metabolism; protoporphyrin-IX biosynthesis; protoporphyrin-IX from protoporphyrinogen-IX: step 1/1. Catalyzes the oxidation of protoporphyrinogen IX to protoporphyrin IX. Is involved in the biosynthesis of tetrapyrrole molecules like heme. Does not use oxygen or artificial electron acceptors such as menadione or benzoquinone. The sequence is that of Protoporphyrinogen IX oxidase from Rickettsia prowazekii (strain Madrid E).